Consider the following 202-residue polypeptide: Imidazoleglycerol-phosphate dehydratase (202 aa).

The protein belongs to the imidazoleglycerol-phosphate dehydratase family.

It is found in the cytoplasm. The catalysed reaction is D-erythro-1-(imidazol-4-yl)glycerol 3-phosphate = 3-(imidazol-4-yl)-2-oxopropyl phosphate + H2O. The protein operates within amino-acid biosynthesis; L-histidine biosynthesis; L-histidine from 5-phospho-alpha-D-ribose 1-diphosphate: step 6/9. This Rhizobium meliloti (strain 1021) (Ensifer meliloti) protein is Imidazoleglycerol-phosphate dehydratase.